Consider the following 226-residue polypeptide: MNPILTNRLQKKLGYTFQQHDLLLQALTHRSASSKHNERLEFLGDSILSYVIANALYQRFPRVDEGDMSRMRATLVRGNTLAEMAREFELGECLRLGPGELKSGGFRRESILADTVEALIGGVFLDSDIRTVEKLILDWYRSRLDEISPGDKQKDPKTRLQEYLQGRHLPLPTYQVVQVRGEAHDQEFTIHCQVSGLAQPVVGNGSSRRKAEQAAAEQALKLLELE.

The 123-residue stretch at 6–128 folds into the RNase III domain; the sequence is TNRLQKKLGY…LIGGVFLDSD (123 aa). A Mg(2+)-binding site is contributed by Glu-41. Residue Asp-45 is part of the active site. Positions 114 and 117 each coordinate Mg(2+). Residue Glu-117 is part of the active site. Residues 155–225 enclose the DRBM domain; the sequence is DPKTRLQEYL…AEQALKLLEL (71 aa).

The protein belongs to the ribonuclease III family. In terms of assembly, homodimer. Mg(2+) is required as a cofactor.

The protein localises to the cytoplasm. The enzyme catalyses Endonucleolytic cleavage to 5'-phosphomonoester.. Its function is as follows. Digests double-stranded RNA. Involved in the processing of primary rRNA transcript to yield the immediate precursors to the large and small rRNAs (23S and 16S). Processes some mRNAs, and tRNAs when they are encoded in the rRNA operon. Processes pre-crRNA and tracrRNA of type II CRISPR loci if present in the organism. This chain is Ribonuclease 3, found in Sodalis glossinidius (strain morsitans).